The following is a 199-amino-acid chain: 5'-deoxynucleotidase YfbR (199 aa).

Residues 18–19 and His33 contribute to the substrate site; that span reads RW. Residues 30–142 form the HD domain; sequence VSEHSLQVAM…VKQADALCAY (113 aa). A divalent metal cation contacts are provided by His33, His68, and Asp69. Residues Asp69, 77–80, and Asp137 contribute to the substrate site; that span reads DLPT. Asp137 contributes to the a divalent metal cation binding site.

It belongs to the 5DNU family. Homodimer. It depends on a divalent metal cation as a cofactor.

It localises to the cytoplasm. The catalysed reaction is a 2'-deoxyribonucleoside 5'-phosphate + H2O = a 2'-deoxyribonucleoside + phosphate. Catalyzes the strictly specific dephosphorylation of 2'-deoxyribonucleoside 5'-monophosphates. This Salmonella arizonae (strain ATCC BAA-731 / CDC346-86 / RSK2980) protein is 5'-deoxynucleotidase YfbR.